The sequence spans 294 residues: UDP-3-O-acyl-N-acetylglucosamine deacetylase (294 aa).

Positions 75, 232, and 236 each coordinate Zn(2+). The active-site Proton donor is the His259.

Belongs to the LpxC family. Zn(2+) serves as cofactor.

It carries out the reaction a UDP-3-O-[(3R)-3-hydroxyacyl]-N-acetyl-alpha-D-glucosamine + H2O = a UDP-3-O-[(3R)-3-hydroxyacyl]-alpha-D-glucosamine + acetate. Its pathway is glycolipid biosynthesis; lipid IV(A) biosynthesis; lipid IV(A) from (3R)-3-hydroxytetradecanoyl-[acyl-carrier-protein] and UDP-N-acetyl-alpha-D-glucosamine: step 2/6. Catalyzes the hydrolysis of UDP-3-O-myristoyl-N-acetylglucosamine to form UDP-3-O-myristoylglucosamine and acetate, the committed step in lipid A biosynthesis. The chain is UDP-3-O-acyl-N-acetylglucosamine deacetylase from Campylobacter fetus subsp. fetus (strain 82-40).